The sequence spans 522 residues: Zinc finger protein C25B8.19c (522 aa).

5 disordered regions span residues 1-25 (MSSD…LPTT), 61-96 (DPQA…SNSN), 235-265 (QRQS…QEVT), 311-386 (QPSS…HTLS), and 413-462 (NSAQ…STSS). Positions 84-96 (AGNTNTPTTSNSN) are enriched in low complexity. Polar residues-rich tracts occupy residues 311-321 (QPSSRDLQNHP) and 335-344 (ASNTLNHANG). The span at 345 to 362 (NQAENASESSTSQSNDSQ) shows a compositional bias: low complexity. Residues 413–427 (NSAQAHPMGQQSDSN) are compositionally biased toward polar residues. Basic and acidic residues predominate over residues 428 to 438 (YSDHHNNDKRA). The segment covering 453 to 462 (SHTGSSSTSS) has biased composition (low complexity). 2 C2H2-type zinc fingers span residues 468 to 495 (YRCT…GERP) and 496 to 522 (FVCD…IHGL).

The protein resides in the nucleus. The protein is Zinc finger protein C25B8.19c of Schizosaccharomyces pombe (strain 972 / ATCC 24843) (Fission yeast).